The sequence spans 310 residues: Nucleotide-binding protein Ddes_0972 (310 aa).

Residue 30–37 (GLSGAGKS) participates in ATP binding. 82–85 (DLRQ) contributes to the GTP binding site.

The protein belongs to the RapZ-like family.

Its function is as follows. Displays ATPase and GTPase activities. The sequence is that of Nucleotide-binding protein Ddes_0972 from Desulfovibrio desulfuricans (strain ATCC 27774 / DSM 6949 / MB).